The primary structure comprises 462 residues: Integrator complex subunit 12 (462 aa).

The tract at residues 39 to 132 (LARGIDSSYR…PETRSSPITV (94 aa)) is disordered. The span at 59–86 (ISSTKTVSVKQEPKTSSSLPSGNNNGKV) shows a compositional bias: polar residues. A Glycyl lysine isopeptide (Lys-Gly) (interchain with G-Cter in SUMO2) cross-link involves residue K68. Positions 88-125 (TTEKVKKEGEKRPADKMKSDITEGADVPKKPRLEKPET) are enriched in basic and acidic residues. Phosphoserine is present on S128. The PHD-type zinc finger occupies 159 to 215 (GLACVVCRQMTVASGNQLVECQECHNLYHQDCHKPQVTDKEVTDPRLVWYCARCTRQ). Residue K254 forms a Glycyl lysine isopeptide (Lys-Gly) (interchain with G-Cter in SUMO2) linkage. Polar residues predominate over residues 305-328 (PSTAKLSSAAQNNSGKPATSSANQ). The tract at residues 305 to 462 (PSTAKLSSAA…KKAAQKKLKK (158 aa)) is disordered. 2 stretches are compositionally biased toward low complexity: residues 347 to 358 (KIGSSNSTSPTV) and 382 to 431 (VSKV…PSAS). Residues 434–443 (GPTSQESQLN) show a composition bias toward polar residues. The segment covering 449 to 462 (QMVKKKAAQKKLKK) has biased composition (basic residues).

This sequence belongs to the Integrator subunit 12 family. In terms of assembly, component of the Integrator complex, composed of core subunits INTS1, INTS2, INTS3, INTS4, INTS5, INTS6, INTS7, INTS8, INTS9/RC74, INTS10, INTS11/CPSF3L, INTS12, INTS13, INTS14 and INTS15. The core complex associates with protein phosphatase 2A subunits PPP2CA and PPP2R1A, to form the Integrator-PP2A (INTAC) complex. In terms of processing, dephosphorylated at Ser-128 by the PNUTS-PP1 complex, promoting RNA polymerase II transcription pause-release.

The protein localises to the nucleus. In terms of biological role, component of the integrator complex, a multiprotein complex that terminates RNA polymerase II (Pol II) transcription in the promoter-proximal region of genes. The integrator complex provides a quality checkpoint during transcription elongation by driving premature transcription termination of transcripts that are unfavorably configured for transcriptional elongation: the complex terminates transcription by (1) catalyzing dephosphorylation of the C-terminal domain (CTD) of Pol II subunit POLR2A/RPB1 and SUPT5H/SPT5, (2) degrading the exiting nascent RNA transcript via endonuclease activity and (3) promoting the release of Pol II from bound DNA. The integrator complex is also involved in terminating the synthesis of non-coding Pol II transcripts, such as enhancer RNAs (eRNAs), small nuclear RNAs (snRNAs), telomerase RNAs and long non-coding RNAs (lncRNAs). Mediates recruitment of cytoplasmic dynein to the nuclear envelope, probably as component of the integrator complex. This is Integrator complex subunit 12 (INTS12) from Bos taurus (Bovine).